Consider the following 600-residue polypeptide: Dihydroxy-acid dehydratase (600 aa).

Mg(2+) is bound at residue Asp-82. Residue Cys-123 participates in [2Fe-2S] cluster binding. Mg(2+) is bound by residues Asp-124 and Lys-125. An N6-carboxylysine modification is found at Lys-125. Cys-192 serves as a coordination point for [2Fe-2S] cluster. Residue Glu-489 participates in Mg(2+) binding. Residue Ser-515 is the Proton acceptor of the active site.

The protein belongs to the IlvD/Edd family. As to quaternary structure, homodimer. The cofactor is [2Fe-2S] cluster. Requires Mg(2+) as cofactor.

It catalyses the reaction (2R)-2,3-dihydroxy-3-methylbutanoate = 3-methyl-2-oxobutanoate + H2O. The catalysed reaction is (2R,3R)-2,3-dihydroxy-3-methylpentanoate = (S)-3-methyl-2-oxopentanoate + H2O. It functions in the pathway amino-acid biosynthesis; L-isoleucine biosynthesis; L-isoleucine from 2-oxobutanoate: step 3/4. Its pathway is amino-acid biosynthesis; L-valine biosynthesis; L-valine from pyruvate: step 3/4. In terms of biological role, functions in the biosynthesis of branched-chain amino acids. Catalyzes the dehydration of (2R,3R)-2,3-dihydroxy-3-methylpentanoate (2,3-dihydroxy-3-methylvalerate) into 2-oxo-3-methylpentanoate (2-oxo-3-methylvalerate) and of (2R)-2,3-dihydroxy-3-methylbutanoate (2,3-dihydroxyisovalerate) into 2-oxo-3-methylbutanoate (2-oxoisovalerate), the penultimate precursor to L-isoleucine and L-valine, respectively. This is Dihydroxy-acid dehydratase from Bacteroides thetaiotaomicron (strain ATCC 29148 / DSM 2079 / JCM 5827 / CCUG 10774 / NCTC 10582 / VPI-5482 / E50).